We begin with the raw amino-acid sequence, 421 residues long: Zinc metalloproteinase-disintegrin-like crotastatin (421 aa).

The region spanning 10 to 206 (KYVKLFLVAD…NMPQCILKKP (197 aa)) is the Peptidase M12B domain. An N-linked (GlcNAc...) asparagine glycan is attached at N29. 3 disulfides stabilise this stretch: C121-C201, C161-C185, and C163-C168. H146 provides a ligand contact to Zn(2+). E147 is an active-site residue. Residues H150 and H156 each coordinate Zn(2+). Residues 214-299 (PAVCGNYFVE…TECTDRFQRN (86 aa)) form the Disintegrin domain. Ca(2+) is bound by residues V216, N219, F221, E223, E226, and D229. Cystine bridges form between C217–C246, C228–C241, C230–C236, C240–C263, C254–C260, C259–C285, C272–C292, C279–C310, C303–C315, C322–C372, C337–C383, C350–C360, C367–C409, and C403–C414. Positions 278–280 (ECD) match the D/ECD-tripeptide motif. Ca(2+) contacts are provided by D280, M281, D283, D294, and R295.

The protein belongs to the venom metalloproteinase (M12B) family. P-III subfamily. P-IIIc sub-subfamily. As to quaternary structure, homodimer; disulfide-linked. It depends on Zn(2+) as a cofactor. As to expression, expressed by the venom gland.

The protein localises to the secreted. Its function is as follows. Snake venom zinc metalloprotease that induces apoptosis in vascular endothelial cells (VEC), without degrading the extracellular matrix (it cannot cleave collagen) or inhibiting adhesion of VEC. Has also fibrinogenolytic and hemorrhagic activities. The sequence is that of Zinc metalloproteinase-disintegrin-like crotastatin from Crotalus durissus terrificus (South American rattlesnake).